Consider the following 182-residue polypeptide: uncharacterized protein (182 aa).

A Macro domain is found at 1-170 (MIVKIIKGDI…IFVNIFEREL (170 aa)).

This is an uncharacterized protein from Sulfurisphaera tokodaii (strain DSM 16993 / JCM 10545 / NBRC 100140 / 7) (Sulfolobus tokodaii).